A 73-amino-acid chain; its full sequence is Translation initiation factor IF-1 (73 aa).

One can recognise an S1-like domain in the interval 1–73 (MSKKKDVIEM…TRGRITYRYK (73 aa)).

This sequence belongs to the IF-1 family. As to quaternary structure, component of the 30S ribosomal translation pre-initiation complex which assembles on the 30S ribosome in the order IF-2 and IF-3, IF-1 and N-formylmethionyl-tRNA(fMet); mRNA recruitment can occur at any time during PIC assembly.

It localises to the cytoplasm. One of the essential components for the initiation of protein synthesis. Stabilizes the binding of IF-2 and IF-3 on the 30S subunit to which N-formylmethionyl-tRNA(fMet) subsequently binds. Helps modulate mRNA selection, yielding the 30S pre-initiation complex (PIC). Upon addition of the 50S ribosomal subunit IF-1, IF-2 and IF-3 are released leaving the mature 70S translation initiation complex. The chain is Translation initiation factor IF-1 from Chloroflexus aurantiacus (strain ATCC 29366 / DSM 635 / J-10-fl).